The chain runs to 196 residues: Small ribosomal subunit protein uS4c (196 aa).

The disordered stretch occupies residues 16-36 (GALPGLTRKTPKSGSNLKKKF). The S4 RNA-binding domain maps to 89–169 (MRLDNILFRL…LPKHLTIDTL (81 aa)).

The protein belongs to the universal ribosomal protein uS4 family. As to quaternary structure, part of the 30S ribosomal subunit. Contacts protein S5. The interaction surface between S4 and S5 is involved in control of translational fidelity.

It localises to the plastid. Its subcellular location is the chloroplast. Its function is as follows. One of the primary rRNA binding proteins, it binds directly to 16S rRNA where it nucleates assembly of the body of the 30S subunit. With S5 and S12 plays an important role in translational accuracy. This Brachypodium pinnatum (Tor grass) protein is Small ribosomal subunit protein uS4c (rps4).